The primary structure comprises 440 residues: Suppressor of cytokine signaling 4 (440 aa).

The span at 1 to 10 (MAENNENISK) shows a compositional bias: polar residues. Residues 1–29 (MAENNENISKNVDVRPKTSRSRSADRKDG) form a disordered region. Basic and acidic residues predominate over residues 12-29 (VDVRPKTSRSRSADRKDG). The SH2 domain occupies 286 to 381 (CYWGVMDKYA…FFEPLLSTPL (96 aa)). An SOCS box domain is found at 376 to 425 (LLSTPLIRTFPFSLQHICRTVICNCTTYDGIDALPIPSSMKLYLKEYHYK).

It participates in protein modification; protein ubiquitination. Its function is as follows. SOCS family proteins form part of a classical negative feedback system that regulates cytokine signal transduction. Substrate-recognition component of a SCF-like ECS (Elongin BC-CUL2/5-SOCS-box protein) E3 ubiquitin-protein ligase complex which mediates the ubiquitination and subsequent proteasomal degradation of target proteins. Inhibits EGF signaling by mediating the degradation of the Tyr-phosphorylated EGF receptor/EGFR. The sequence is that of Suppressor of cytokine signaling 4 (SOCS4) from Homo sapiens (Human).